Reading from the N-terminus, the 99-residue chain is MALTPQDIGRIANLARLELSPAESERMLTQLNGFFGIVEKMRAVDTAGLEPLSHPVAAIQDIALRLREDTASEPDQREANQRSAPAVERGLFLVPKVIE.

The protein belongs to the GatC family. Heterotrimer of A, B and C subunits.

The catalysed reaction is L-glutamyl-tRNA(Gln) + L-glutamine + ATP + H2O = L-glutaminyl-tRNA(Gln) + L-glutamate + ADP + phosphate + H(+). It carries out the reaction L-aspartyl-tRNA(Asn) + L-glutamine + ATP + H2O = L-asparaginyl-tRNA(Asn) + L-glutamate + ADP + phosphate + 2 H(+). In terms of biological role, allows the formation of correctly charged Asn-tRNA(Asn) or Gln-tRNA(Gln) through the transamidation of misacylated Asp-tRNA(Asn) or Glu-tRNA(Gln) in organisms which lack either or both of asparaginyl-tRNA or glutaminyl-tRNA synthetases. The reaction takes place in the presence of glutamine and ATP through an activated phospho-Asp-tRNA(Asn) or phospho-Glu-tRNA(Gln). The polypeptide is Aspartyl/glutamyl-tRNA(Asn/Gln) amidotransferase subunit C (Paracidovorax citrulli (strain AAC00-1) (Acidovorax citrulli)).